The chain runs to 296 residues: Cytidine deaminase (296 aa).

2 consecutive CMP/dCMP-type deaminase domains span residues 47 to 167 and 186 to 296; these read SQDE…FGPA and ESAD…VDPV. Residue 88 to 90 participates in substrate binding; the sequence is NLE. H101 contributes to the Zn(2+) binding site. E103 acts as the Proton donor in catalysis. Zn(2+) is bound by residues C128 and C131.

It belongs to the cytidine and deoxycytidylate deaminase family. As to quaternary structure, homodimer. Requires Zn(2+) as cofactor.

The catalysed reaction is cytidine + H2O + H(+) = uridine + NH4(+). It catalyses the reaction 2'-deoxycytidine + H2O + H(+) = 2'-deoxyuridine + NH4(+). Functionally, this enzyme scavenges exogenous and endogenous cytidine and 2'-deoxycytidine for UMP synthesis. This Shewanella loihica (strain ATCC BAA-1088 / PV-4) protein is Cytidine deaminase.